The sequence spans 359 residues: Histamine H2 receptor (359 aa).

The Extracellular portion of the chain corresponds to 1–22; that stretch reads MAPNGTASSFCLDSTACKITIT. N-linked (GlcNAc...) asparagine glycosylation is present at Asn4. The chain crosses the membrane as a helical span at residues 23-44; the sequence is VVLAVLILITVAGNVVVCLAVG. Residues 45-57 lie on the Cytoplasmic side of the membrane; sequence LNRRLRNLTNCFI. A helical membrane pass occupies residues 58 to 81; the sequence is VSLAITDLLLGLLVLPFSAIYQLS. Topologically, residues 82–92 are extracellular; sequence CKWSFGKVFCN. A disulfide bridge connects residues Cys91 and Cys174. The chain crosses the membrane as a helical span at residues 93-114; it reads IYTSLDVMLCTASILNLFMISL. The Cytoplasmic segment spans residues 115 to 134; sequence DRYCAVMDPLRYPVLVTPVR. A helical transmembrane segment spans residues 135–159; it reads VAISLVLIWVISITLSFLSIHLGWN. Residues 160 to 180 are Extracellular-facing; that stretch reads SRNETSKGNHTTSKCKVQVNE. The chain crosses the membrane as a helical span at residues 181–204; it reads VYGLVDGLVTFYLPLLIMCITYYR. Residues 205–234 are Cytoplasmic-facing; sequence IFKVARDQAKRINHISSWKAATIREHKATV. Residues 235-258 traverse the membrane as a helical segment; that stretch reads TLAAVMGAFIICWFPYFTAFVYRG. Over 259–267 the chain is Extracellular; sequence LRGDDAINE. A helical transmembrane segment spans residues 268–289; it reads VLEAIVLWLGYANSALNPILYA. Residues 290-359 lie on the Cytoplasmic side of the membrane; it reads ALNRDFRTGY…VTAPQGATDR (70 aa). Residue Cys305 is the site of S-palmitoyl cysteine attachment. The tract at residues 316 to 340 is disordered; it reads SLRSNASQLSRTQSREPRQQEEKPL. Polar residues predominate over residues 317-327; it reads LRSNASQLSRT. The span at 328-340 shows a compositional bias: basic and acidic residues; sequence QSREPRQQEEKPL.

This sequence belongs to the G-protein coupled receptor 1 family.

Its subcellular location is the cell membrane. Its function is as follows. The H2 subclass of histamine receptors mediates gastric acid secretion. Also appears to regulate gastrointestinal motility and intestinal secretion. Possible role in regulating cell growth and differentiation. The activity of this receptor is mediated by G proteins which activate adenylyl cyclase and, through a separate G protein-dependent mechanism, the phosphoinositide/protein kinase (PKC) signaling pathway. This chain is Histamine H2 receptor (HRH2), found in Gorilla gorilla gorilla (Western lowland gorilla).